The following is a 308-amino-acid chain: MAVAMDNAILENILRQVRPLIGQGKVADYIPALATVDGSRLGIAICTVDGQLFQAGDAQERFSIQSISKVLSLVVAMRHYSEEEIWQRVGKDPSGSPFNSLVQLEMEQGIPRNPFINTGALVVCDMLQGRLSAPRQRMLEVVRGLSGVSDISYDTVVARSEFEHSARNAAIAWLMKSFGNFHHDVTTVLQNYFHYCALKMSCVELARTFVFLANQGKAIHIDEPVVTPMQARQINALMATSGMYQNAGEFAWRVGLPAKSGVGGGIVAIVPHEMAIAVWSPELDDAGNSLAGIAVLEQLTKQLGRSVY.

Residues S66, N117, E161, N168, Y192, Y244, and V262 each coordinate substrate.

The protein belongs to the glutaminase family. In terms of assembly, homotetramer.

It catalyses the reaction L-glutamine + H2O = L-glutamate + NH4(+). The chain is Glutaminase 2 from Shigella flexneri.